The primary structure comprises 325 residues: Transcription initiation factor IIB 2 (325 aa).

The span at 1–13 (MSDSTIRTYSSDQ) shows a compositional bias: polar residues. Residues 1–29 (MSDSTIRTYSSDQRQTDNDETVSTPDEDV) are disordered. The TFIIB-type zinc-finger motif lies at 28–58 (DVLTCPECGGQVIDDEEHGESVCVDCGLVVE). Zn(2+)-binding residues include cysteine 32, cysteine 35, cysteine 50, and cysteine 53. A disordered region spans residues 73-93 (STEKDEKSRVGAPTTNMMHDK). Tandem repeats lie at residues 144–227 (GEIE…VREL) and 238–319 (QYVP…ELLE).

Belongs to the TFIIB family.

Functionally, stabilizes TBP binding to an archaeal box-A promoter. Also responsible for recruiting RNA polymerase II to the pre-initiation complex (DNA-TBP-TFIIB). This Halobacterium salinarum (strain ATCC 700922 / JCM 11081 / NRC-1) (Halobacterium halobium) protein is Transcription initiation factor IIB 2.